The primary structure comprises 251 residues: MKIIIAPAKKMQVDTDSFDATTMPVYLKQTQKILTMMKQLTYSDLKMLWKCSDKLAQLNYERLQGLDLKYQLTPAIMAYVGIQYQYMAPDLMTEKQLAYIQEHLRILSGFYGVLRPFDGIVPYRLEMQAKLKIDNYNNLCQFWGAKLYQNLYKDNRAVVNLASKEYEKAVRPFLQEDDKMTTCIFGEIIDGKVKQKATPAKEARGEMVNFMALNQVKNTKELKSFDRLNYAYRADLSSADKMVFIKNELHK.

This sequence belongs to the UPF0246 family.

In Pediococcus pentosaceus (strain ATCC 25745 / CCUG 21536 / LMG 10740 / 183-1w), this protein is UPF0246 protein PEPE_1842.